A 195-amino-acid chain; its full sequence is GTP cyclohydrolase 1 (195 aa).

Cys-86, His-89, and Cys-158 together coordinate Zn(2+).

This sequence belongs to the GTP cyclohydrolase I family. As to quaternary structure, homomer.

The catalysed reaction is GTP + H2O = 7,8-dihydroneopterin 3'-triphosphate + formate + H(+). The protein operates within cofactor biosynthesis; 7,8-dihydroneopterin triphosphate biosynthesis; 7,8-dihydroneopterin triphosphate from GTP: step 1/1. This chain is GTP cyclohydrolase 1, found in Ruminiclostridium cellulolyticum (strain ATCC 35319 / DSM 5812 / JCM 6584 / H10) (Clostridium cellulolyticum).